The sequence spans 159 residues: Nascent polypeptide-associated complex subunit beta (159 aa).

2 disordered regions span residues 1–39 and 121–159; these read MDME…GMDD and ESYQ…DKVE. The segment covering 23–32 has biased composition (basic residues); sequence TPRRKVKNVH. In terms of domain architecture, NAC-A/B spans 36 to 101; that stretch reads GMDDKKLQTS…GEDKELTELV (66 aa). Over residues 136-153 the composition is skewed to acidic residues; sequence KDDDEDDDDIPDLVEGEN.

This sequence belongs to the NAC-beta family. Part of the nascent polypeptide-associated complex (NAC), consisting of EGD2 and EGD1. NAC associates with ribosomes via EGD1.

The protein resides in the cytoplasm. The protein localises to the nucleus. Functionally, component of the nascent polypeptide-associated complex (NAC), a dynamic component of the ribosomal exit tunnel, protecting the emerging polypeptides from interaction with other cytoplasmic proteins to ensure appropriate nascent protein targeting. The NAC complex also promotes mitochondrial protein import by enhancing productive ribosome interactions with the outer mitochondrial membrane and blocks the inappropriate interaction of ribosomes translating non-secretory nascent polypeptides with translocation sites in the membrane of the endoplasmic reticulum. EGD1 may act as a transcription factor that exert a negative effect on the expression of several genes that are transcribed by RNA polymerase II. The sequence is that of Nascent polypeptide-associated complex subunit beta (egd1) from Botryotinia fuckeliana (strain B05.10) (Noble rot fungus).